The following is a 739-amino-acid chain: Phosphoribosylformylglycinamidine synthase subunit PurL (739 aa).

His52 is a catalytic residue. ATP is bound by residues Tyr55 and Lys94. A Mg(2+)-binding site is contributed by Glu96. Residues 97 to 100 (SHNH) and Arg119 contribute to the substrate site. His98 acts as the Proton acceptor in catalysis. Asp120 lines the Mg(2+) pocket. Gln243 contributes to the substrate binding site. Position 273 (Asp273) interacts with Mg(2+). Position 317-319 (317-319 (ESQ)) interacts with substrate. ATP-binding residues include Asp500 and Gly537. A Mg(2+)-binding site is contributed by Asn538. Residue Ser540 coordinates substrate.

It belongs to the FGAMS family. Monomer. Part of the FGAM synthase complex composed of 1 PurL, 1 PurQ and 2 PurS subunits.

The protein resides in the cytoplasm. The catalysed reaction is N(2)-formyl-N(1)-(5-phospho-beta-D-ribosyl)glycinamide + L-glutamine + ATP + H2O = 2-formamido-N(1)-(5-O-phospho-beta-D-ribosyl)acetamidine + L-glutamate + ADP + phosphate + H(+). It functions in the pathway purine metabolism; IMP biosynthesis via de novo pathway; 5-amino-1-(5-phospho-D-ribosyl)imidazole from N(2)-formyl-N(1)-(5-phospho-D-ribosyl)glycinamide: step 1/2. In terms of biological role, part of the phosphoribosylformylglycinamidine synthase complex involved in the purines biosynthetic pathway. Catalyzes the ATP-dependent conversion of formylglycinamide ribonucleotide (FGAR) and glutamine to yield formylglycinamidine ribonucleotide (FGAM) and glutamate. The FGAM synthase complex is composed of three subunits. PurQ produces an ammonia molecule by converting glutamine to glutamate. PurL transfers the ammonia molecule to FGAR to form FGAM in an ATP-dependent manner. PurS interacts with PurQ and PurL and is thought to assist in the transfer of the ammonia molecule from PurQ to PurL. This is Phosphoribosylformylglycinamidine synthase subunit PurL from Enterococcus faecalis (strain ATCC 700802 / V583).